We begin with the raw amino-acid sequence, 160 residues long: Cyclic pyranopterin monophosphate synthase (160 aa).

Substrate is bound by residues 76–78 and 114–115; these read LCH and ME. Residue D129 is part of the active site.

It belongs to the MoaC family. In terms of assembly, homohexamer; trimer of dimers.

The enzyme catalyses (8S)-3',8-cyclo-7,8-dihydroguanosine 5'-triphosphate = cyclic pyranopterin phosphate + diphosphate. The protein operates within cofactor biosynthesis; molybdopterin biosynthesis. In terms of biological role, catalyzes the conversion of (8S)-3',8-cyclo-7,8-dihydroguanosine 5'-triphosphate to cyclic pyranopterin monophosphate (cPMP). The sequence is that of Cyclic pyranopterin monophosphate synthase from Vibrio cholerae serotype O1 (strain ATCC 39541 / Classical Ogawa 395 / O395).